The following is a 40-amino-acid chain: Putative protein FAM86JP (40 aa).

The tract at residues 1–40 (MPGAFSQNSSKRRAVLPRSHRVAGRGPAEAGCLPGAPAGS) is disordered. The segment covering 10 to 23 (SKRRAVLPRSHRVA) has biased composition (basic residues).

The chain is Putative protein FAM86JP from Homo sapiens (Human).